A 246-amino-acid polypeptide reads, in one-letter code: Fasciclin-like arabinogalactan protein 11 (246 aa).

The N-terminal stretch at 1-24 (MATSRTFIFSNLFIFFLVIATTYG) is a signal peptide. Residues 34 to 179 (PTNITAILEK…LAVYQVDQVL (146 aa)) form the FAS1 domain. N-linked (GlcNAc...) asparagine glycans are attached at residues N36, N68, N141, and N150. The segment at 193 to 222 (PAPEKGGSVSKGSASGGDDGGDSTDSSDAE) is disordered. A lipid anchor (GPI-anchor amidated serine) is attached at S219. A propeptide spans 220-246 (DAERTGFGFGIRITTVAAIAASSSLWI) (removed in mature form).

The protein belongs to the fasciclin-like AGP family. Expressed in the sclerenchyma cells of inflorescence stems and siliques.

The protein localises to the cell membrane. May be a cell surface adhesion protein. The chain is Fasciclin-like arabinogalactan protein 11 (FLA11) from Arabidopsis thaliana (Mouse-ear cress).